We begin with the raw amino-acid sequence, 607 residues long: Dolichyl-diphosphooligosaccharide--protein glycosyltransferase subunit 1 (607 aa).

An N-terminal signal peptide occupies residues 1–24 (MEVPTARLLLLLLLGAWAPAPESA). The Lumenal segment spans residues 25–434 (SPEAPLLVNE…VVHYTFNKVL (410 aa)). An N6-acetyllysine modification is found at Lys187. Asn299 carries N-linked (GlcNAc...) asparagine glycosylation. Residues 435–455 (MLQEPLLVVAAFYILFFTVII) traverse the membrane as a helical segment. Topologically, residues 456–607 (YVRLDFSITK…TKIDHILDAL (152 aa)) are cytoplasmic. Lys538 bears the N6-acetyllysine; alternate mark. Residue Lys538 forms a Glycyl lysine isopeptide (Lys-Gly) (interchain with G-Cter in SUMO2); alternate linkage.

Belongs to the OST1 family. Component of the oligosaccharyltransferase (OST) complex. OST exists in two different complex forms which contain common core subunits RPN1, RPN2, OST48, OST4, DAD1 and TMEM258, either STT3A or STT3B as catalytic subunits, and form-specific accessory subunits. STT3A complex assembly occurs through the formation of 3 subcomplexes. Subcomplex 1 contains RPN1 and TMEM258, subcomplex 2 contains the STT3A-specific subunits STT3A, DC2/OSTC, and KCP2 as well as the core subunit OST4, and subcomplex 3 contains RPN2, DAD1, and OST48. The STT3A complex can form stable complexes with the Sec61 complex or with both the Sec61 and TRAP complexes. Interacts with TMEM35A/NACHO. In terms of processing, ubiquitinated by the ECS(ASB11) complex. Ufmylated by UFL1 in response to endoplasmic reticulum stress, promoting reticulophagy of endoplasmic reticulum sheets.

The protein localises to the endoplasmic reticulum membrane. Its pathway is protein modification; protein glycosylation. Its function is as follows. Subunit of the oligosaccharyl transferase (OST) complex that catalyzes the initial transfer of a defined glycan (Glc(3)Man(9)GlcNAc(2) in eukaryotes) from the lipid carrier dolichol-pyrophosphate to an asparagine residue within an Asn-X-Ser/Thr consensus motif in nascent polypeptide chains, the first step in protein N-glycosylation. N-glycosylation occurs cotranslationally and the complex associates with the Sec61 complex at the channel-forming translocon complex that mediates protein translocation across the endoplasmic reticulum (ER). All subunits are required for a maximal enzyme activity. The protein is Dolichyl-diphosphooligosaccharide--protein glycosyltransferase subunit 1 of Canis lupus familiaris (Dog).